Reading from the N-terminus, the 369-residue chain is RNA-binding protein rnp24 (369 aa).

Disordered stretches follow at residues Met1–Glu77, Thr200–Ile219, and Arg304–Asp369. The 102-residue stretch at Trp105–Pro206 folds into the RRM 1 domain. Positions Pro209–Ile219 are enriched in polar residues. The RRM 2 domain maps to Ser228 to Pro310. Positions Gln325–Ser341 are enriched in basic and acidic residues. The segment covering Ala346–Ala357 has biased composition (low complexity).

It localises to the nucleus. In Schizosaccharomyces pombe (strain 972 / ATCC 24843) (Fission yeast), this protein is RNA-binding protein rnp24 (rnp24).